The primary structure comprises 438 residues: Glycosyl hydrolase family 109 protein (438 aa).

Positions 1 to 33 (MDKTSRRDLLKLASLAGIGAGLARSQGSSKSMA) form a signal peptide, tat-type signal. Residues 52-53 (GR), aspartate 74, 125-128 (WVWH), 145-146 (EV), and asparagine 174 contribute to the NAD(+) site. Substrate is bound by residues tyrosine 203, arginine 221, 233-236 (YPTH), and tyrosine 315. Tyrosine 233 lines the NAD(+) pocket. Residues 408 to 438 (GPLSEASVANGSAPQKFPDFTRGKWQTRQPV) are disordered.

It belongs to the Gfo/Idh/MocA family. Glycosyl hydrolase 109 subfamily. NAD(+) is required as a cofactor. Post-translationally, predicted to be exported by the Tat system. The position of the signal peptide cleavage has not been experimentally proven.

In terms of biological role, glycosidase. The protein is Glycosyl hydrolase family 109 protein of Solibacter usitatus (strain Ellin6076).